A 312-amino-acid chain; its full sequence is Acetyl-coenzyme A carboxylase carboxyl transferase subunit alpha (312 aa).

Positions asparagine 36–glutamate 286 constitute a CoA carboxyltransferase C-terminal domain.

It belongs to the AccA family. In terms of assembly, acetyl-CoA carboxylase is a heterohexamer composed of biotin carboxyl carrier protein (AccB), biotin carboxylase (AccC) and two subunits each of ACCase subunit alpha (AccA) and ACCase subunit beta (AccD).

The protein localises to the cytoplasm. The enzyme catalyses N(6)-carboxybiotinyl-L-lysyl-[protein] + acetyl-CoA = N(6)-biotinyl-L-lysyl-[protein] + malonyl-CoA. The protein operates within lipid metabolism; malonyl-CoA biosynthesis; malonyl-CoA from acetyl-CoA: step 1/1. Component of the acetyl coenzyme A carboxylase (ACC) complex. First, biotin carboxylase catalyzes the carboxylation of biotin on its carrier protein (BCCP) and then the CO(2) group is transferred by the carboxyltransferase to acetyl-CoA to form malonyl-CoA. The sequence is that of Acetyl-coenzyme A carboxylase carboxyl transferase subunit alpha from Campylobacter jejuni subsp. jejuni serotype O:23/36 (strain 81-176).